Consider the following 29-residue polypeptide: Varv peptide E (29 aa).

Positions 1–29 (GLPICGETCVGGTCNTPGCSCSWPVCTRN) form a cross-link, cyclopeptide (Gly-Asn). Intrachain disulfides connect Cys5/Cys19, Cys9/Cys21, and Cys14/Cys26.

In terms of processing, this is a cyclic peptide.

Its function is as follows. Probably participates in a plant defense mechanism. Has cytotoxic activity against human lymphoma U-937 GTB and human myeloma RPMI-8226/s cell lines. The sequence is that of Varv peptide E from Viola arvensis (European field pansy).